Here is a 1065-residue protein sequence, read N- to C-terminus: DNA-directed RNA polymerase subunit beta (1065 aa).

This sequence belongs to the RNA polymerase beta chain family. In terms of assembly, in plastids the minimal PEP RNA polymerase catalytic core is composed of four subunits: alpha, beta, beta', and beta''. When a (nuclear-encoded) sigma factor is associated with the core the holoenzyme is formed, which can initiate transcription.

It is found in the plastid. It localises to the chloroplast. The catalysed reaction is RNA(n) + a ribonucleoside 5'-triphosphate = RNA(n+1) + diphosphate. In terms of biological role, DNA-dependent RNA polymerase catalyzes the transcription of DNA into RNA using the four ribonucleoside triphosphates as substrates. This chain is DNA-directed RNA polymerase subunit beta, found in Marchantia polymorpha (Common liverwort).